The primary structure comprises 75 residues: Cruzioseptin-6 (75 aa).

Residues 1 to 22 (MAYLKKSLFLVLFLGLVSLSIC) form the signal peptide. Positions 23-43 (EEEKREEENEEEQEDDDQSEE) are excised as a propeptide. Positions 24–44 (EEKREEENEEEQEDDDQSEEK) are disordered. A compositionally biased stretch (acidic residues) spans 30 to 41 (ENEEEQEDDDQS).

In terms of tissue distribution, expressed by the skin glands.

The protein resides in the secreted. Has antimicrobial activity. The polypeptide is Cruzioseptin-6 (Cruziohyla calcarifer (Splendid leaf frog)).